A 417-amino-acid chain; its full sequence is Tol-Pal system protein TolB (417 aa).

The signal sequence occupies residues 1 to 16 (MRYLWLFLIHTIGLFA).

The protein belongs to the TolB family. In terms of assembly, the Tol-Pal system is composed of five core proteins: the inner membrane proteins TolA, TolQ and TolR, the periplasmic protein TolB and the outer membrane protein Pal. They form a network linking the inner and outer membranes and the peptidoglycan layer.

The protein localises to the periplasm. In terms of biological role, part of the Tol-Pal system, which plays a role in outer membrane invagination during cell division and is important for maintaining outer membrane integrity. In Helicobacter pylori (strain ATCC 700392 / 26695) (Campylobacter pylori), this protein is Tol-Pal system protein TolB.